A 103-amino-acid polypeptide reads, in one-letter code: Large ribosomal subunit protein bL28 (103 aa).

This sequence belongs to the bacterial ribosomal protein bL28 family.

This Anaplasma marginale (strain St. Maries) protein is Large ribosomal subunit protein bL28.